The chain runs to 415 residues: Tyrosine--tRNA ligase (415 aa).

Position 34 (Tyr-34) interacts with L-tyrosine. A 'HIGH' region motif is present at residues 39–48 (PSADSLHLGN). L-tyrosine contacts are provided by Tyr-162 and Gln-166. The 'KMSKS' region signature appears at 224 to 228 (KFGKS). Lys-227 serves as a coordination point for ATP. The 68-residue stretch at 346–413 (IKIIDLLNLA…KRNYFLIVWN (68 aa)) folds into the S4 RNA-binding domain.

The protein belongs to the class-I aminoacyl-tRNA synthetase family. TyrS type 1 subfamily. As to quaternary structure, homodimer.

It is found in the cytoplasm. The enzyme catalyses tRNA(Tyr) + L-tyrosine + ATP = L-tyrosyl-tRNA(Tyr) + AMP + diphosphate + H(+). In terms of biological role, catalyzes the attachment of tyrosine to tRNA(Tyr) in a two-step reaction: tyrosine is first activated by ATP to form Tyr-AMP and then transferred to the acceptor end of tRNA(Tyr). This chain is Tyrosine--tRNA ligase, found in Ureaplasma urealyticum serovar 10 (strain ATCC 33699 / Western).